Reading from the N-terminus, the 134-residue chain is U-scoloptoxin(05)-Er2a (134 aa).

An N-terminal signal peptide occupies residues 1–19; it reads MTFVVAAVVLLTVVPLATP.

The protein belongs to the scoloptoxin-05 family. Post-translationally, contains 5 disulfide bonds. As to expression, expressed by the venom gland.

It localises to the secreted. This chain is U-scoloptoxin(05)-Er2a, found in Ethmostigmus rubripes (Giant centipede).